We begin with the raw amino-acid sequence, 290 residues long: 33 kDa chaperonin (290 aa).

Disulfide bonds link Cys234-Cys236 and Cys267-Cys270.

It belongs to the HSP33 family. Post-translationally, under oxidizing conditions two disulfide bonds are formed involving the reactive cysteines. Under reducing conditions zinc is bound to the reactive cysteines and the protein is inactive.

The protein localises to the cytoplasm. Functionally, redox regulated molecular chaperone. Protects both thermally unfolding and oxidatively damaged proteins from irreversible aggregation. Plays an important role in the bacterial defense system toward oxidative stress. The chain is 33 kDa chaperonin from Colwellia psychrerythraea (strain 34H / ATCC BAA-681) (Vibrio psychroerythus).